Consider the following 507-residue polypeptide: MTLAVMLQGTASDVGKSVLVAGLCRIFHQDGLRTAPFKSQNMALNSGITPDGKEMGRAQIFQAEAAGIAPDVRMNPILLKPTSDRQAQVVLMGQVATSMDAVSYHQYKPRLREQILAVYQSLAGEYEALVLEGAGSPAEINLRDRDIVNMGMAEMAQCPVILVADIDRGGVFAAIYGTLALLQPQERARVKGVIINKFRGDVALLRSGIEQIEALTGVPVLGVMPWLDVDLEDEDGVALQAGKYHRTDRRDIDIAVVHLPHIANFTDFNALAAQPDVRVRYVRDPQALADADLVILPGSKNTLGDLCWLRESGMAHAVEQARQRKVPLLGICGGYQMLGETIIDEVESGLGAQPGLGVLKTVTHFAQHKTTTQVQATLGSALPDWLADAAGLRVSGYEIHMGETRREAGCPPLLQLHKAGQAVDDGAISDDGLAFGTYLHGLFDSDAFTRALLNGLRQRKGLAPLDSALEYARYKTRQFDRLAEAMREHIAIDKIYAIMRQHQEPLC.

A GATase cobBQ-type domain is found at 251 to 448 (DIDIAVVHLP…LHGLFDSDAF (198 aa)). The active-site Nucleophile is C332. H440 is a catalytic residue.

It belongs to the CobB/CobQ family. CobQ subfamily.

It participates in cofactor biosynthesis; adenosylcobalamin biosynthesis. Its function is as follows. Catalyzes amidations at positions B, D, E, and G on adenosylcobyrinic A,C-diamide. NH(2) groups are provided by glutamine, and one molecule of ATP is hydrogenolyzed for each amidation. The sequence is that of Cobyric acid synthase from Klebsiella pneumoniae subsp. pneumoniae (strain ATCC 700721 / MGH 78578).